Reading from the N-terminus, the 81-residue chain is Conotoxin ArMKLT2-0311 (81 aa).

The signal sequence occupies residues 1 to 22; it reads MKLTCVLIVALLFLTACQLTTA. The span at 23–34 shows a compositional bias: basic and acidic residues; sequence DDSRDKQEDPLV. Residues 23-45 form a disordered region; it reads DDSRDKQEDPLVRSHRKMQKSED. Positions 23-51 are excised as a propeptide; the sequence is DDSRDKQEDPLVRSHRKMQKSEDPKMAER. 3 cysteine pairs are disulfide-bonded: C52–C67, C59–C71, and C66–C80.

This sequence belongs to the conotoxin O1 superfamily. Expressed by the venom duct.

It localises to the secreted. In Conus arenatus (Sand-dusted cone), this protein is Conotoxin ArMKLT2-0311.